The primary structure comprises 63 residues: ComG operon repressor (63 aa).

Negatively regulates the transcription of the comG operon. The sequence is that of ComG operon repressor (comZ) from Bacillus subtilis (strain 168).